A 338-amino-acid chain; its full sequence is Phenylalanine--tRNA ligase alpha subunit (338 aa).

Residue Glu252 coordinates Mg(2+).

Belongs to the class-II aminoacyl-tRNA synthetase family. Phe-tRNA synthetase alpha subunit type 1 subfamily. In terms of assembly, tetramer of two alpha and two beta subunits. Requires Mg(2+) as cofactor.

The protein localises to the cytoplasm. The enzyme catalyses tRNA(Phe) + L-phenylalanine + ATP = L-phenylalanyl-tRNA(Phe) + AMP + diphosphate + H(+). This Fusobacterium nucleatum subsp. nucleatum (strain ATCC 25586 / DSM 15643 / BCRC 10681 / CIP 101130 / JCM 8532 / KCTC 2640 / LMG 13131 / VPI 4355) protein is Phenylalanine--tRNA ligase alpha subunit.